The following is a 116-amino-acid chain: Flagellar transcriptional regulator FlhD (116 aa).

It belongs to the FlhD family. Homodimer; disulfide-linked. Forms a heterohexamer composed of two FlhC and four FlhD subunits. Each FlhC binds a FlhD dimer, forming a heterotrimer, and a hexamer assembles by dimerization of two heterotrimers.

The protein localises to the cytoplasm. In terms of biological role, functions in complex with FlhC as a master transcriptional regulator that regulates transcription of several flagellar and non-flagellar operons by binding to their promoter region. Activates expression of class 2 flagellar genes, including fliA, which is a flagellum-specific sigma factor that turns on the class 3 genes. Also regulates genes whose products function in a variety of physiological pathways. The protein is Flagellar transcriptional regulator FlhD of Xenorhabdus nematophila (Achromobacter nematophilus).